The chain runs to 230 residues: MQGKINYKDITQKEMFNEIFKEYVKEEKQIDLGTCDQDSVHDLWRRFVKRWNDGKMKSKWYSLGKRISQPSYARLVGPSRPTLENLQDRRELQEQLNELRKLSRKSAFKSQAKRETELLDEILPKEPAGSKEAMQQKKKEKRAALKHYREASDNEEDLKETDLYGDRDSFQSRLKQKKQRSEFRASKREMERLERDQELRNKIEERNKKELETIEKLRELAKARLQGFSS.

The interval 118 to 195 (LLDEILPKEP…SKREMERLER (78 aa)) is disordered. The segment covering 136–146 (QKKKEKRAALK) has biased composition (basic residues). Basic and acidic residues-rich tracts occupy residues 160 to 170 (ETDLYGDRDSF) and 179 to 195 (QRSE…RLER).

This is an uncharacterized protein from Schizosaccharomyces pombe (strain 972 / ATCC 24843) (Fission yeast).